Reading from the N-terminus, the 66-residue chain is MKKEIHPEYVECKVSCACGNTFTTKSNKAELRVDICSNCHPFFTGSEKIVDAAGRVEKFKKKYAMQ.

The Zn(2+) site is built by C16, C18, C36, and C39.

It belongs to the bacterial ribosomal protein bL31 family. Type A subfamily. In terms of assembly, part of the 50S ribosomal subunit. The cofactor is Zn(2+).

Binds the 23S rRNA. In Campylobacter jejuni subsp. jejuni serotype O:6 (strain 81116 / NCTC 11828), this protein is Large ribosomal subunit protein bL31.